The chain runs to 607 residues: WD repeat-containing protein 1-A (607 aa).

WD repeat units follow at residues 4–45 (ELKK…IRNI), 48–87 (PAIA…IWDT), 93–135 (LLKY…LWDT), 138–176 (SVGE…FLEG), 180–218 (KFKF…LYDG), 224–263 (VCSL…IWDV), 270–306 (TTFN…YLDK), 311–351 (RPLR…YWDA), 358–408 (TFTG…KMDV), 432–474 (LKDK…LYSI), 480–518 (KDEG…VFSV), 523–561 (SEKN…VWTL), and 566–604 (TRIK…QWTV).

It belongs to the WD repeat AIP1 family.

It is found in the cell membrane. Its subcellular location is the cytoplasm. It localises to the cytoskeleton. The protein localises to the nucleus. In terms of biological role, induces disassembly of actin filaments in conjunction with ADF/cofilin family proteins. Doesn't sever actin filaments alone, but caps the barbed ends of filaments severed by cofilin, which blocks annealing and depolymerization and allows more extensive severing by cofilin. In Xenopus laevis (African clawed frog), this protein is WD repeat-containing protein 1-A (wdr1-a).